Here is a 134-residue protein sequence, read N- to C-terminus: Flagellar basal-body rod protein FlgC (134 aa).

Belongs to the flagella basal body rod proteins family. In terms of assembly, the basal body constitutes a major portion of the flagellar organelle and consists of four rings (L,P,S, and M) mounted on a central rod. The rod consists of about 26 subunits of FlgG in the distal portion, and FlgB, FlgC and FlgF are thought to build up the proximal portion of the rod with about 6 subunits each.

The protein resides in the bacterial flagellum basal body. The sequence is that of Flagellar basal-body rod protein FlgC (flgC) from Salmonella typhi.